A 345-amino-acid polypeptide reads, in one-letter code: Methionine import ATP-binding protein MetN (345 aa).

Residues 2–241 (IKLNNIXKIF…PKTELAQEFI (240 aa)) enclose the ABC transporter domain. 38–45 (GASGAGKS) contributes to the ATP binding site.

Belongs to the ABC transporter superfamily. Methionine importer (TC 3.A.1.24) family. The complex is composed of two ATP-binding proteins (MetN), two transmembrane proteins (MetI) and a solute-binding protein (MetQ).

It is found in the cell inner membrane. It catalyses the reaction L-methionine(out) + ATP + H2O = L-methionine(in) + ADP + phosphate + H(+). It carries out the reaction D-methionine(out) + ATP + H2O = D-methionine(in) + ADP + phosphate + H(+). Functionally, part of the ABC transporter complex MetNIQ involved in methionine import. Responsible for energy coupling to the transport system. In Haemophilus influenzae (strain ATCC 51907 / DSM 11121 / KW20 / Rd), this protein is Methionine import ATP-binding protein MetN.